The chain runs to 111 residues: Nucleoid-associated protein CT0805 (111 aa).

This sequence belongs to the YbaB/EbfC family. As to quaternary structure, homodimer.

It localises to the cytoplasm. It is found in the nucleoid. Its function is as follows. Binds to DNA and alters its conformation. May be involved in regulation of gene expression, nucleoid organization and DNA protection. The sequence is that of Nucleoid-associated protein CT0805 from Chlorobaculum tepidum (strain ATCC 49652 / DSM 12025 / NBRC 103806 / TLS) (Chlorobium tepidum).